The chain runs to 140 residues: ATP synthase epsilon chain (140 aa).

It belongs to the ATPase epsilon chain family. As to quaternary structure, F-type ATPases have 2 components, CF(1) - the catalytic core - and CF(0) - the membrane proton channel. CF(1) has five subunits: alpha(3), beta(3), gamma(1), delta(1), epsilon(1). CF(0) has three main subunits: a, b and c.

Its subcellular location is the cell inner membrane. Its function is as follows. Produces ATP from ADP in the presence of a proton gradient across the membrane. The sequence is that of ATP synthase epsilon chain from Xanthomonas axonopodis pv. citri (strain 306).